Here is a 104-residue protein sequence, read N- to C-terminus: Growth-regulated protein homolog (104 aa).

A signal peptide spans 1 to 31 (MAPAATAAAPRLLRAALLLLLLVAAGRRAAG). 2 disulfides stabilise this stretch: Cys-40–Cys-66 and Cys-42–Cys-82.

The protein belongs to the intercrine alpha (chemokine CxC) family.

It is found in the secreted. In terms of biological role, plays a role in monocyte adhesion to the endothelium. The chain is Growth-regulated protein homolog from Oryctolagus cuniculus (Rabbit).